Consider the following 72-residue polypeptide: uncharacterized protein (72 aa).

This is an uncharacterized protein from Escherichia coli O157:H7.